We begin with the raw amino-acid sequence, 716 residues long: Probable glutamate--tRNA ligase, cytoplasmic (716 aa).

Position 190 is a phosphoserine (S190). Position 210 to 212 (210 to 212 (RFP)) interacts with L-glutamate. A 'HIGH' region motif is present at residues 215-224 (PSGYLHIGHA). H220 is an ATP binding site. Residues D246, 386–390 (YDFAC), and R404 each bind L-glutamate. ATP contacts are provided by residues E407 and 441 to 445 (LLSKR). Residues 441–445 (LLSKR) carry the 'KMSKS' region motif.

This sequence belongs to the class-I aminoacyl-tRNA synthetase family. Glutamate--tRNA ligase type 2 subfamily. In terms of assembly, component of a yeast aminoacyl-tRNA synthase (aaRS) complex formed by methionyl-tRNA synthase, glutamyl-tRNA synthase and the tRNA aminoacylation cofactor arc1 in a stoichiometric complex. Interacts with arc1/SPAC30C2.04.

The protein localises to the cytoplasm. It is found in the nucleus. It catalyses the reaction tRNA(Glu) + L-glutamate + ATP = L-glutamyl-tRNA(Glu) + AMP + diphosphate. Its function is as follows. Catalyzes the attachment of glutamate to tRNA(Glu) in a two-step reaction: glutamate is first activated by ATP to form Glu-AMP and then transferred to the acceptor end of tRNA(Glu). This is Probable glutamate--tRNA ligase, cytoplasmic (gus1) from Schizosaccharomyces pombe (strain 972 / ATCC 24843) (Fission yeast).